The following is a 307-amino-acid chain: Aspartate carbamoyltransferase catalytic subunit (307 aa).

Residues R54 and T55 each contribute to the carbamoyl phosphate site. K83 contributes to the L-aspartate binding site. Carbamoyl phosphate contacts are provided by R104, H132, and Q135. The L-aspartate site is built by R165 and R228. 2 residues coordinate carbamoyl phosphate: L267 and P268.

Belongs to the aspartate/ornithine carbamoyltransferase superfamily. ATCase family. In terms of assembly, heterododecamer (2C3:3R2) of six catalytic PyrB chains organized as two trimers (C3), and six regulatory PyrI chains organized as three dimers (R2).

It catalyses the reaction carbamoyl phosphate + L-aspartate = N-carbamoyl-L-aspartate + phosphate + H(+). The protein operates within pyrimidine metabolism; UMP biosynthesis via de novo pathway; (S)-dihydroorotate from bicarbonate: step 2/3. Catalyzes the condensation of carbamoyl phosphate and aspartate to form carbamoyl aspartate and inorganic phosphate, the committed step in the de novo pyrimidine nucleotide biosynthesis pathway. This is Aspartate carbamoyltransferase catalytic subunit from Clostridium botulinum (strain Alaska E43 / Type E3).